A 443-amino-acid chain; its full sequence is CBL-interacting protein kinase 29 (443 aa).

Residues 32-292 (YELGGLLGRG…TEEIITHPWF (261 aa)) form the Protein kinase domain. Residues 38 to 46 (LGRGASAKV) and Lys61 each bind ATP. The Proton acceptor role is filled by Asp164. The interval 182-207 (DFGLGAVADGALHHTLCGTPAYVAPE) is activation loop. One can recognise an NAF domain in the interval 313–347 (AKFKTEFKEDDMARDMTAFDILACSPGSDLSGLFG). The segment at 350 to 379 (PGKERVFVGEPAAAVLSRVEEAGKKEGYMV) is PPI.

This sequence belongs to the protein kinase superfamily. CAMK Ser/Thr protein kinase family. SNF1 subfamily. Requires Mn(2+) as cofactor.

The catalysed reaction is L-seryl-[protein] + ATP = O-phospho-L-seryl-[protein] + ADP + H(+). It carries out the reaction L-threonyl-[protein] + ATP = O-phospho-L-threonyl-[protein] + ADP + H(+). In terms of biological role, CIPK serine-threonine protein kinases interact with CBL proteins. Binding of a CBL protein to the regulatory NAF domain of CIPK protein lead to the activation of the kinase in a calcium-dependent manner. This Oryza sativa subsp. japonica (Rice) protein is CBL-interacting protein kinase 29 (CIPK29).